Here is a 478-residue protein sequence, read N- to C-terminus: Glutamyl-tRNA(Gln) amidotransferase subunit A 2 (478 aa).

Residues K79 and S154 each act as charge relay system in the active site. Residue S178 is the Acyl-ester intermediate of the active site.

Belongs to the amidase family. GatA subfamily. As to quaternary structure, heterotrimer of A, B and C subunits.

The catalysed reaction is L-glutamyl-tRNA(Gln) + L-glutamine + ATP + H2O = L-glutaminyl-tRNA(Gln) + L-glutamate + ADP + phosphate + H(+). In terms of biological role, allows the formation of correctly charged Gln-tRNA(Gln) through the transamidation of misacylated Glu-tRNA(Gln) in organisms which lack glutaminyl-tRNA synthetase. The reaction takes place in the presence of glutamine and ATP through an activated gamma-phospho-Glu-tRNA(Gln). In Clostridium acetobutylicum (strain ATCC 824 / DSM 792 / JCM 1419 / IAM 19013 / LMG 5710 / NBRC 13948 / NRRL B-527 / VKM B-1787 / 2291 / W), this protein is Glutamyl-tRNA(Gln) amidotransferase subunit A 2 (gatA2).